A 105-amino-acid chain; its full sequence is Vacuolar ATPase assembly integral membrane protein VMA21 homolog (105 aa).

Residues 1–26 (MSTKNKKAAGGNGGAPKQTRQQSHDS) are disordered. Over 1–36 (MSTKNKKAAGGNGGAPKQTRQQSHDSQDYSSFKTVL) the chain is Cytoplasmic. The helical transmembrane segment at 37 to 57 (FYCMLIVFLPVLTFFVLKGFV) threads the bilayer. Residues 58–68 (LDQFLDISEVK) lie on the Lumenal side of the membrane. A helical membrane pass occupies residues 69 to 89 (VNIASAVGAVVALHVALGLYI). Over 90-105 (YRAYFGAPGSKASKTD) the chain is Cytoplasmic.

Belongs to the VMA21 family.

It localises to the endoplasmic reticulum membrane. The protein resides in the endoplasmic reticulum-Golgi intermediate compartment membrane. It is found in the cytoplasmic vesicle. Its subcellular location is the COPII-coated vesicle membrane. Functionally, required for the assembly of the V0 complex of the vacuolar ATPase (V-ATPase) in the endoplasmic reticulum. This is Vacuolar ATPase assembly integral membrane protein VMA21 homolog from Drosophila yakuba (Fruit fly).